We begin with the raw amino-acid sequence, 859 residues long: MARGLQGVMLRSFGARDHTATVIETISIAPHFVRVRMVSPTLFQDAEAEPAAWLRFWFPDPNGSNTEFQRAYTISEADPAAGRFAVDVVLHDPAGPASSWARTVKPGATIAVMSLMGSSRFDVPEEQPAGYLLIGDSASIPGMNGIIETVPNDVPIEMYLEQHDDNDTLIPLAKHPRLRVRWVMRRDEKSLAEAIENRDWSDWYAWATPEAAALKCVRVRLRDEFGFPKSEIHAQAYWNAGRAMGTHRATEPAATEPEVGAAPQPESAVPAPARGSWRAQAASRLLAPLKLPLVLSGVLAALVTLAQLAPFVLLVELSRLLVSGAGAHRLFTVGFAAVGLLGTGALLAAALTLWLHVIDARFARALRLRLLSKLSRLPLGWFTSRGSGSIKKLVTDDTLALHYLVTHAVPDAVAAVVAPVGVLVYLFVVDWRVALVLFGPVLVYLTITSSLTIQSGPRIVQAQRWAEKMNGEAGSYLEGQPVIRVFGAASSSFRRRLDEYIGFLVAWQRPLAGKKTLMDLATRPATFLWLIAATGTLLVATHRMDPVNLLPFMFLGTTFGARLLGIAYGLGGLRTGLLAARHLQVTLDETELAVREHPREPLDGEAPATVVFDHVTFGYRPGVPVIQDVSLTLRPGTVTALVGPSGSGKSTLATLLARFHDVERGAIRVGGQDIRSLAADELYTRVGFVLQEAQLVHGTAAENIALAVPDAPAEQVQVAAREAQIHDRVLRLPDGYDTVLGANSGLSGGERQRLTIARAILGDTPVLILDEATAFADPESEYLVQQALNRLTRDRTVLVIAHRLHTITRADQIVVLDHGRIVERGTHEELLAAGGRYCRLWDTGQGSRVAVAAAQDGTR.

Over 1 to 292 (MARGLQGVML…SRLLAPLKLP (292 aa)) the chain is Cytoplasmic. The region spanning 15 to 122 (ARDHTATVIE…MSLMGSSRFD (108 aa)) is the FAD-binding FR-type domain. Residues 70-73 (RAYT), 87-91 (DVVLH), and 97-98 (AS) contribute to the FAD site. The segment at 247–267 (HRATEPAATEPEVGAAPQPES) is disordered. A helical transmembrane segment spans residues 293–313 (LVLSGVLAALVTLAQLAPFVL). Residues 293 to 575 (LVLSGVLAAL…IAYGLGGLRT (283 aa)) enclose the ABC transmembrane type-1 domain. Topologically, residues 314–334 (LVELSRLLVSGAGAHRLFTVG) are periplasmic. Residues 335–355 (FAAVGLLGTGALLAAALTLWL) traverse the membrane as a helical segment. Residues 356 to 408 (HVIDARFARALRLRLLSKLSRLPLGWFTSRGSGSIKKLVTDDTLALHYLVTHA) are Cytoplasmic-facing. Residues 409-429 (VPDAVAAVVAPVGVLVYLFVV) form a helical membrane-spanning segment. The Periplasmic portion of the chain corresponds to 430–432 (DWR). A helical membrane pass occupies residues 433-453 (VALVLFGPVLVYLTITSSLTI). Residues 454-519 (QSGPRIVQAQ…PLAGKKTLMD (66 aa)) are Cytoplasmic-facing. The chain crosses the membrane as a helical span at residues 520-540 (LATRPATFLWLIAATGTLLVA). Topologically, residues 541–548 (THRMDPVN) are periplasmic. A helical transmembrane segment spans residues 549-569 (LLPFMFLGTTFGARLLGIAYG). Residues 570-859 (LGGLRTGLLA…AVAAAQDGTR (290 aa)) lie on the Cytoplasmic side of the membrane. Positions 610 to 843 (VVFDHVTFGY…GGRYCRLWDT (234 aa)) constitute an ABC transporter domain. An ATP-binding site is contributed by 643 to 650 (GPSGSGKS).

This sequence belongs to the ABC transporter superfamily. Siderophore-Fe(3+) uptake transporter (SIUT) (TC 3.A.1.21) family. As to quaternary structure, forms a heterodimer with IrtB. Requires FAD as cofactor.

The protein resides in the cell inner membrane. In terms of biological role, part of the ABC transporter complex IrtAB involved in the import of iron-bound mycobactin (Fe-MBT) and carboxymycobactin (Fe-cMBT). Mycobactins are then reduced by the siderophore interaction domain to facilitate iron release in the bacterial cell. Transmembrane domains (TMD) form a pore in the membrane and the ATP-binding domain (NBD) is responsible for energy generation. Required for replication in human macrophages and in mouse lungs. In Mycobacterium tuberculosis (strain ATCC 25618 / H37Rv), this protein is Mycobactin import ATP-binding/permease protein IrtA (irtA).